A 457-amino-acid polypeptide reads, in one-letter code: tRNA-2-methylthio-N(6)-dimethylallyladenosine synthase (457 aa).

One can recognise an MTTase N-terminal domain in the interval 3-120 (KKVYVKTFGC…LPQMIDARRA (118 aa)). Cys-12, Cys-49, Cys-83, Cys-157, Cys-161, and Cys-164 together coordinate [4Fe-4S] cluster. The Radical SAM core domain maps to 143–377 (RVEGPSAFVS…QATIEENVAR (235 aa)). Residues 380-447 (QSMVGKVERI…PHSLRGELLL (68 aa)) enclose the TRAM domain.

The protein belongs to the methylthiotransferase family. MiaB subfamily. Monomer. [4Fe-4S] cluster serves as cofactor.

It localises to the cytoplasm. The catalysed reaction is N(6)-dimethylallyladenosine(37) in tRNA + (sulfur carrier)-SH + AH2 + 2 S-adenosyl-L-methionine = 2-methylsulfanyl-N(6)-dimethylallyladenosine(37) in tRNA + (sulfur carrier)-H + 5'-deoxyadenosine + L-methionine + A + S-adenosyl-L-homocysteine + 2 H(+). Catalyzes the methylthiolation of N6-(dimethylallyl)adenosine (i(6)A), leading to the formation of 2-methylthio-N6-(dimethylallyl)adenosine (ms(2)i(6)A) at position 37 in tRNAs that read codons beginning with uridine. The protein is tRNA-2-methylthio-N(6)-dimethylallyladenosine synthase of Burkholderia vietnamiensis (strain G4 / LMG 22486) (Burkholderia cepacia (strain R1808)).